The primary structure comprises 302 residues: Large ribosomal subunit protein uL29m (302 aa).

Residues 1–38 (MASSGAARPAASRVLQRCQPFSSSTSCAAPVTTWRTLA) constitute a mitochondrion transit peptide. Residues 255–302 (EPVADHLETPETSGQEKVGELSPAGAVDPSTILASKTGKPVTDAPRSS) form a disordered region.

It belongs to the universal ribosomal protein uL29 family. As to quaternary structure, component of the mitochondrial large ribosomal subunit. Mature mitochondrial ribosomes consist of a small (37S) and a large (54S) subunit. The 37S subunit contains at least 33 different proteins and 1 molecule of RNA (15S). The 54S subunit contains at least 45 different proteins and 1 molecule of RNA (21S).

The protein resides in the mitochondrion. This Pyricularia oryzae (strain 70-15 / ATCC MYA-4617 / FGSC 8958) (Rice blast fungus) protein is Large ribosomal subunit protein uL29m (MRPL4).